The following is a 390-amino-acid chain: Serine/threonine/tyrosine-protein kinase HT1 (390 aa).

The region spanning 86–359 (LFIGNKFASG…GLPLTSHASL (274 aa)) is the Protein kinase domain. Residues 92-100 (FASGAHSRI) and lysine 113 each bind ATP. Aspartate 212 serves as the catalytic Proton acceptor.

It belongs to the protein kinase superfamily. Ser/Thr protein kinase family. In terms of assembly, interacts with DTX56. Binds to MPK4 and MPK12. Associates to CBC1 and CBC2. Autophosphorylated. Mainly localizes in guard cells. Expressed at low level in leaves, stems, roots and flowers.

The protein localises to the cell membrane. It carries out the reaction L-seryl-[protein] + ATP = O-phospho-L-seryl-[protein] + ADP + H(+). The catalysed reaction is L-threonyl-[protein] + ATP = O-phospho-L-threonyl-[protein] + ADP + H(+). It catalyses the reaction L-tyrosyl-[protein] + ATP = O-phospho-L-tyrosyl-[protein] + ADP + H(+). Inhibited by MPK4 and MPK12. Functionally, serine/threonine/tyrosine kinase involved in the control of stomatal movement in response to CO(2). Functions as a major negative regulator of CO(2)-induced stomatal closing. Does not seem to be involved in stomatal closure in response to abscisic acid (ABA) or light. Involved in the control of red light-induced stomatal opening. Is epistatic to SRK2E/OST1 function during stomatal responses to red light and altered CO(2). Phosphorylates SRK2E/OST1 and GHR1 to prevents SRK2E/OST1- and GHR1-induced activation of SLAC1, thus preventing stomatal closure. Mediates the phosphorylation of CBC1 and CBC2. The sequence is that of Serine/threonine/tyrosine-protein kinase HT1 from Arabidopsis thaliana (Mouse-ear cress).